The primary structure comprises 347 residues: Endophilin-A3 (347 aa).

The tract at residues 1–21 (MSVAGLKKQFHKASQLFSEKI) is membrane-binding amphipathic helix. The BAR domain maps to 18-249 (SEKISGAEGT…LELRISLASK (232 aa)). Residues 60–87 (PNPAYRAKLGMLNTVSKLRGQVKATGYP) are required for dimerization upon membrane association. Positions 180-201 (EEEIRQAVEKFEESKELAERSM) form a coiled coil. Residues 218–254 (FVEAALDYHRQSTEILQELQSKLELRISLASKVPKRE) are interaction with ARC. The segment at 255–288 (FMPKPVNMSSTDANGVGPSSSSKTPGTDTPADQP) is disordered. Positions 261 to 281 (NMSSTDANGVGPSSSSKTPGT) are enriched in polar residues. The region spanning 285 to 344 (ADQPCCRGLYDFEPENEGELGFKEGDIITLTNQIDENWYEGMLRGESGFFPINYVEVIVP) is the SH3 domain.

Belongs to the endophilin family. In terms of assembly, interacts with ARC, DNM1, SGIP1, SYNJ1 and DYDC1. Interacts with FASLG. Interacts with ATXN2. Interacts with BIN2.

The protein resides in the cytoplasm. Its subcellular location is the early endosome membrane. In terms of biological role, implicated in endocytosis. May recruit other proteins to membranes with high curvature. The protein is Endophilin-A3 (Sh3gl3) of Mus musculus (Mouse).